The sequence spans 146 residues: Hemoglobin subunit beta-2 (146 aa).

The Globin domain maps to 2-146; the sequence is HWTAEEKQLV…VAHALAYHYH (145 aa). Positions 63 and 92 each coordinate heme b.

This sequence belongs to the globin family. There are three forms of hemoglobin in Sphenodon: A, A' and D. Hb A is a tetramer of two alpha-A and two beta-1, Hb A' is a tetramer of two alpha-a and two beta-2, Hb D is a tetramer of two alpha-D and two beta-2.

Involved in oxygen transport from the lung to the various peripheral tissues. The polypeptide is Hemoglobin subunit beta-2 (HBB2) (Sphenodon punctatus (Tuatara)).